We begin with the raw amino-acid sequence, 1167 residues long: MEAVVTSSQTVRAEVAELLGIEESALDPDADLIASGLDSIRMMSLSGRWRKQGIDVRFAAMAANPTVAAWTRLVGERTAESPGAATQSGDTAASAGDPDAPFPLAPIQHALWVGRNELTELGGVAAHLYVEFDGAGVDPERLRTAAAALAARHPMLRVDILGDGMQRISDRDLPVKVTDLRHLDVADAEQQLEVIRHAKSHQLLEGEVLELALTLLPDGRTRLHVDLDMQAADAVSYRNFMADLAALYRGAQLPELQYTYRQYRSAFTATPAPTVDEDRRWWTERIPDLPEPPALPLVPRAEQRDPRRGTRRWHFLDTDIRDRLFAAARARGITPAMAFAASYAGTLARWSTSRHFLLNLPMFGREPFHPDVDKLVGDFTSSLMLDVDFTEAHTPAQRARVMQEALHTSAEHATYSGLSVLRDLSRHHGSPSLAPFVFTSALGLGDLFAGDVTDQFGTPVWHISQGPQVLLDAQVTPFDGGLLVNWDVREDAFRPGVIDAMFAYQLAELERLAADDAAWDAADPPAVPPAQRAVRDAVNDTGARRSDDALHDGFFRTAAHTPDATAVIGSTGTLTYAELRERVLAVTGALQVAGIKPGDTVAVMGPKCADQVTALLAIHAAGAVYVPIGADQPADRADSILQTAGVRMALACGDEPPTFLPALTIAEAVRVGSRVHGVTPATVEPDRVAYVLFTSGSTGAPKGVEVTHAAAMNTLEFINDHFGIGPSDRSLALSTLEGDLSVLDVFGMLRAGGSLVVVDEAQRRDPDSWARLIAEHSVTVLHWMPGWLEMLLEVGGALPSVRVVPTGGDWVRTEMVRELRRAAPGVRFAGLGGATETAIHNTICEPGELPREWSAVPFGRPLPNNACRVVAADGADCPDWVPGELWVGGRGIARGYRGRPDLTAERFVVHDGRTWYRTGDLVRYLPDGQIDFVGRADHRVKISGYRIELGEVEAALRRIAGVEAAVAAVLTAPGDGRGEQLAAIVRASSPAVTVDELTRRMAELVPPHMVPSHIALVEAVPFTVGGKIDRRAVTAELTRSMAERANAQAPTYRVPSTALERALADIVSTVLDRDSVGADDDFFELGGDSVLATQAVARIREWLDSPGVMVTDIFAARRVGALARRLVDHESGSDRLEGVAELYLEVADMNSADVASALHSTSAQASR.

The Carrier 1 domain maps to 2 to 78 (EAVVTSSQTV…AWTRLVGERT (77 aa)). At Ser39 the chain carries O-(pantetheine 4'-phosphoryl)serine. The tract at residues 78-100 (TAESPGAATQSGDTAASAGDPDA) is disordered. The interval 98–390 (PDAPFPLAPI…SSLMLDVDFT (293 aa)) is condensation/cyclization. An adenylation region spans residues 575 to 967 (TYAELRERVL…RIAGVEAAVA (393 aa)). One can recognise a Carrier 2 domain in the interval 1054 to 1130 (VPSTALERAL…ALARRLVDHE (77 aa)). Ser1089 bears the O-(pantetheine 4'-phosphoryl)serine mark.

It belongs to the ATP-dependent AMP-binding enzyme family. MbtB subfamily. Requires pantetheine 4'-phosphate as cofactor. In terms of processing, 4'-phosphopantetheine is transferred from CoA to a specific serine in each of the two carrier protein domains, leading to their activation from apo to holo forms.

It participates in siderophore biosynthesis; mycobactin biosynthesis. Involved in the initial steps of the mycobactin biosynthetic pathway. Putatively couples activated salicylic acid with serine or threonine and cyclizes this precursor to the hydroxyphenyloxazoline ring system present in this class of siderophores. The polypeptide is Phenyloxazoline synthase MbtB (mbtB) (Mycobacterium sp. (strain MCS)).